Here is a 72-residue protein sequence, read N- to C-terminus: Translation initiation factor IF-1 (72 aa).

Residues Met-1–Lys-72 form the S1-like domain.

This sequence belongs to the IF-1 family. In terms of assembly, component of the 30S ribosomal translation pre-initiation complex which assembles on the 30S ribosome in the order IF-2 and IF-3, IF-1 and N-formylmethionyl-tRNA(fMet); mRNA recruitment can occur at any time during PIC assembly.

It localises to the cytoplasm. One of the essential components for the initiation of protein synthesis. Stabilizes the binding of IF-2 and IF-3 on the 30S subunit to which N-formylmethionyl-tRNA(fMet) subsequently binds. Helps modulate mRNA selection, yielding the 30S pre-initiation complex (PIC). Upon addition of the 50S ribosomal subunit IF-1, IF-2 and IF-3 are released leaving the mature 70S translation initiation complex. This chain is Translation initiation factor IF-1, found in Desulfitobacterium hafniense (strain Y51).